A 96-amino-acid chain; its full sequence is Conantokin Rl-B (96 aa).

Residues 1–21 (MQLYTYLYLLVPLVTFHLILG) form the signal peptide. Positions 22-78 (TGTLDHGDALTERRSTDATALKPEPVLLQKSSARSTNDNGKDTQMKRILKKRGNKAR) are excised as a propeptide. Residues 51 to 96 (KSSARSTNDNGKDTQMKRILKKRGNKARGEEELAEKAPEFARELAN) are disordered. Basic and acidic residues predominate over residues 77–96 (ARGEEELAEKAPEFARELAN). Position 81 (Glu81) interacts with a divalent metal cation. Residues Glu81, Glu82, and Glu85 each carry the 4-carboxyglutamate modification. Glu85 contacts a divalent metal cation. Residue Pro88 is modified to 4-hydroxyproline. A divalent metal cation is bound by residues Glu89 and Glu93. 4-carboxyglutamate occurs at positions 89 and 93. Asn96 carries the post-translational modification Asparagine amide.

The protein belongs to the conotoxin B superfamily. Requires Ca(2+) as cofactor. The cofactor is Mg(2+). In terms of processing, hydroxylation of Pro-88 is important for NR2B/GRIN2B NMDA receptor selectivity. Removal of hydroxylation does not change global NMDA receptor antagonism (tested on WT neurons), but it decreases the inhibitory potency on NR2B/GRIN2B NMDA receptors and increases the inhibitory potency on NR2A/GRIN2A NMDA receptors. Hydroxylation of Pro-88 locally disrupts a small region of the divalent cation-induced alpha-helix but does not destabilize the entire helix. As to expression, expressed by the venom duct.

Its subcellular location is the secreted. Functionally, conantokins inhibit N-methyl-D-aspartate (NMDA) receptors. This toxin has antagonist activity on the NR2B/GRIN2B subunit (IC(50)=0.1 uM). In vivo, when delivered into the brain, is active has anticonvulsant activity in the model of epilepsy in mice. This is Conantokin Rl-B from Conus rolani (Cone snail).